We begin with the raw amino-acid sequence, 616 residues long: 2-isopropylmalate synthase (616 aa).

The segment at 1-34 (MSPNDAFISAPAKIETPVGPRNEGQPAWNKQRGS) is disordered. The Pyruvate carboxyltransferase domain occupies 67–341 (PQWCAVDLRD…DPQLDFTDIR (275 aa)). 4 residues coordinate Mg(2+): Asp76, His280, His282, and Asn316. Positions 490–616 (RTAPVEQIAL…NHEAVLAGGV (127 aa)) are regulatory domain.

It belongs to the alpha-IPM synthase/homocitrate synthase family. LeuA type 2 subfamily. Homodimer. Mg(2+) is required as a cofactor.

It is found in the cytoplasm. It catalyses the reaction 3-methyl-2-oxobutanoate + acetyl-CoA + H2O = (2S)-2-isopropylmalate + CoA + H(+). It functions in the pathway amino-acid biosynthesis; L-leucine biosynthesis; L-leucine from 3-methyl-2-oxobutanoate: step 1/4. Its function is as follows. Catalyzes the condensation of the acetyl group of acetyl-CoA with 3-methyl-2-oxobutanoate (2-ketoisovalerate) to form 3-carboxy-3-hydroxy-4-methylpentanoate (2-isopropylmalate). This Corynebacterium glutamicum (strain R) protein is 2-isopropylmalate synthase.